The primary structure comprises 461 residues: Dihydrolipoyl dehydrogenase (461 aa).

Residues 33 to 41 (EAAEVGGVC), K50, and A112 contribute to the FAD site. C41 and C46 are disulfide-bonded. NAD(+) is bound by residues 173-177 (GGGAV), E196, and 263-266 (AVGR). FAD-binding residues include D306 and A314. H437 acts as the Proton acceptor in catalysis.

This sequence belongs to the class-I pyridine nucleotide-disulfide oxidoreductase family. As to quaternary structure, homodimer. Requires FAD as cofactor.

The protein localises to the membrane. The catalysed reaction is N(6)-[(R)-dihydrolipoyl]-L-lysyl-[protein] + NAD(+) = N(6)-[(R)-lipoyl]-L-lysyl-[protein] + NADH + H(+). In terms of biological role, has chromate reductase activity. This Thermus scotoductus (strain ATCC 700910 / SA-01) protein is Dihydrolipoyl dehydrogenase.